The primary structure comprises 285 residues: MRVLVITGLSGSGKSTAVRVLEDEGFFCVDNLPVLLFPTIIDLVCRSGENVAGVALVMDIRGRDFIKGFEKVFQQISEAGHTVEVIFFDATDEVLVRRFSETRRRHPALESGSVPEGIRYEREQLAGLRRLATHVIDTSELNVHQLKELVHSRIKGESGTRPLTIHLQSFGYRFGIPLESDIVMDVRFLPNPHFVPELKAGTGLDENVRTYVLEKPETRQFLERFMDLLEFLVPSYQREGKSYLTVSVGCTGGRHRSVAIVEELRAFFAGLGLVVKVSHRDKEKG.

8–15 (GLSGSGKS) contacts ATP. 59-62 (DIRG) is a GTP binding site.

Belongs to the RapZ-like family.

Displays ATPase and GTPase activities. This is Nucleotide-binding protein GSU1884 from Geobacter sulfurreducens (strain ATCC 51573 / DSM 12127 / PCA).